The primary structure comprises 109 residues: Small ribosomal subunit protein bS20 (109 aa).

The protein belongs to the bacterial ribosomal protein bS20 family.

Its function is as follows. Binds directly to 16S ribosomal RNA. The protein is Small ribosomal subunit protein bS20 of Synechococcus sp. (strain JA-2-3B'a(2-13)) (Cyanobacteria bacterium Yellowstone B-Prime).